Here is a 789-residue protein sequence, read N- to C-terminus: Tax1-binding protein 1 (789 aa).

A phosphoserine mark is found at Ser-124, Ser-138, and Ser-225. Residues 144-599 (TTKAGLLELK…LKRSLENPAE (456 aa)) are a coiled coil. The oligomerization stretch occupies residues 320–420 (EEIGRLQLCL…ELKLNAMKKD (101 aa)). Polar residues predominate over residues 481-502 (TGNQQKVNDASVNTDPATSAST). The tract at residues 481 to 508 (TGNQQKVNDASVNTDPATSASTVDVKPS) is disordered. The residue at position 593 (Ser-593) is a Phosphoserine; by IKKA. Phosphoserine is present on Ser-609. A disordered region spans residues 639-660 (YASQETRDGADGAFYPDEIQRP). Residue Ser-666 is modified to Phosphoserine; by IKKA. The interval 678–712 (PARNFSRPDGLEDSEDSKEDENVPTAPDPPSQHLR) is disordered. UBZ1-type zinc fingers lie at residues 727 to 753 (HKKC…VESH) and 754 to 780 (WKVC…VQTH). Zn(2+) is bound by residues Cys-730, Cys-733, His-749, His-753, Cys-757, Cys-760, His-776, and His-780.

Homooligomer. Interacts with TNFAIP3. Interacts with STARD13. Interacts with MYO6. Interacts with TOM1; the interaction is indirect and is mediated by MYO6, which acts as a bridge between TOM1 and TAX1BP1. Interacts with MAVS; this interaction induces MAVS polyubiquitination. Interacts with TNIP1. Interacts with TRAF6; this interaction mediates deubiquitination of TRAF6 and inhibition of NF-kappa-B activation. Interacts with RIPK1; this interaction negatively regulates RIPK1 ubiquitination. Interacts with NBR1. Interacts with TBK1. Interacts with RB1CC1. Interacts with SQSTM1. Interacts with AZI2. Interacts with TICAM1 and TRIM32; these interactions target TICAM1 to TAX1BP1-mediated selective autophagic degradation. As to quaternary structure, (Microbial infection) Interacts with the HTLV-1 protein Tax. In terms of assembly, (Microbial infection) Interacts with Respiratory syncytial virus protein N; this interaction may promote viral growth by inhibiting the innate immune response. (Microbial infection) Interacts with Lassa virus protein Z. As to quaternary structure, (Microbial infection) Interacts with Mopeia virus protein Z. Post-translationally, phosphorylated in the C-terminal region by CHUK/IKKA leading to NF-kappa-B signaling down-regulation. As to expression, expressed in all tissues tested.

It localises to the cytoplasm. The protein localises to the mitochondrion. The protein resides in the preautophagosomal structure. It is found in the cytoplasmic vesicle. Its subcellular location is the autophagosome. In terms of biological role, ubiquitin-binding adapter that participates in inflammatory, antiviral and innate immune processes as well as selective autophagy regulation. Plays a key role in the negative regulation of NF-kappa-B and IRF3 signalings by acting as an adapter for the ubiquitin-editing enzyme A20/TNFAIP3 to bind and inactivate its substrates. Disrupts the interactions between the E3 ubiquitin ligase TRAF3 and TBK1/IKBKE to attenuate 'Lys63'-linked polyubiquitination of TBK1 and thereby IFN-beta production. Also recruits A20/TNFAIP3 to ubiquitinated signaling proteins TRAF6 and RIPK1, leading to their deubiquitination and disruption of IL-1 and TNF-induced NF-kappa-B signaling pathways. Inhibits virus-induced apoptosis by inducing the 'Lys-48'-linked polyubiquitination and degradation of MAVS via recruitment of the E3 ligase ITCH, thereby attenuating MAVS-mediated apoptosis signaling. As a macroautophagy/autophagy receptor, facilitates the xenophagic clearance of pathogenic bacteria such as Salmonella typhimurium and Mycobacterium tuberculosis. Upon NBR1 recruitment to the SQSTM1-ubiquitin condensates, acts as the major recruiter of RB1CC1 to these ubiquitin condensates to promote their autophagic degradation. Mediates the autophagic degradation of other substrates including TICAM1. The polypeptide is Tax1-binding protein 1 (TAX1BP1) (Homo sapiens (Human)).